A 425-amino-acid polypeptide reads, in one-letter code: Phosphomethylpyrimidine synthase (425 aa).

Residues Asn66, Met95, Tyr124, His159, 181–183 (SRG), 222–225 (DAYR), and Glu261 each bind substrate. Zn(2+) is bound at residue His265. Tyr288 contributes to the substrate binding site. Residue His329 participates in Zn(2+) binding. Residues Cys406, Cys409, and Cys413 each coordinate [4Fe-4S] cluster.

Belongs to the ThiC family. [4Fe-4S] cluster serves as cofactor.

It catalyses the reaction 5-amino-1-(5-phospho-beta-D-ribosyl)imidazole + S-adenosyl-L-methionine = 4-amino-2-methyl-5-(phosphooxymethyl)pyrimidine + CO + 5'-deoxyadenosine + formate + L-methionine + 3 H(+). It functions in the pathway cofactor biosynthesis; thiamine diphosphate biosynthesis. Its function is as follows. Catalyzes the synthesis of the hydroxymethylpyrimidine phosphate (HMP-P) moiety of thiamine from aminoimidazole ribotide (AIR) in a radical S-adenosyl-L-methionine (SAM)-dependent reaction. In Archaeoglobus fulgidus (strain ATCC 49558 / DSM 4304 / JCM 9628 / NBRC 100126 / VC-16), this protein is Phosphomethylpyrimidine synthase.